The following is a 471-amino-acid chain: Glutamyl-tRNA(Gln) amidotransferase subunit A, mitochondrial (471 aa).

Active-site charge relay system residues include K64 and S141. S165 acts as the Acyl-ester intermediate in catalysis.

The protein belongs to the amidase family. GatA subfamily. Subunit of the heterotrimeric GatCAB amidotransferase (AdT) complex, composed of A, B and C subunits.

Its subcellular location is the mitochondrion. It catalyses the reaction L-glutamyl-tRNA(Gln) + L-glutamine + ATP + H2O = L-glutaminyl-tRNA(Gln) + L-glutamate + ADP + phosphate + H(+). Allows the formation of correctly charged Gln-tRNA(Gln) through the transamidation of misacylated Glu-tRNA(Gln) in the mitochondria. The reaction takes place in the presence of glutamine and ATP through an activated gamma-phospho-Glu-tRNA(Gln). The sequence is that of Glutamyl-tRNA(Gln) amidotransferase subunit A, mitochondrial from Schizosaccharomyces pombe (strain 972 / ATCC 24843) (Fission yeast).